Consider the following 377-residue polypeptide: Opsin-1 (377 aa).

Over 1-58 (MDPGPGLAALQAWAAKSPAYGAANQTVVDKVPPDMMHMIDPHWYQFPPMNPLWHALLG) the chain is Extracellular. An N-linked (GlcNAc...) asparagine glycan is attached at Asn24. The chain crosses the membrane as a helical span at residues 59 to 79 (FTIGVLGFVSISGNGMVIYIF). The Cytoplasmic segment spans residues 80 to 92 (MSTKSLKTPSNLL). A helical membrane pass occupies residues 93–113 (VVNLAFSDFLMMCAMSPAMVV). Residues 114–129 (NCYYETWVWGPFACEL) are Extracellular-facing. A disulfide bridge connects residues Cys127 and Cys204. A helical membrane pass occupies residues 130–150 (YACAGSLFGCASIWTMTMIAF). The Cytoplasmic segment spans residues 151 to 169 (DRYNVIVKGIAAKPMTSNG). A helical transmembrane segment spans residues 170-190 (ALLRILGIWVFSLAWTLLPFF). Residues 191 to 220 (GWNRYVPEGNMTACGTDYLSKSWVSRSYIL) are Extracellular-facing. N-linked (GlcNAc...) asparagine glycosylation is present at Asn200. Residues 221 to 241 (IYSVFVYFLPLLLIIYSYFFI) form a helical membrane-spanning segment. The Cytoplasmic segment spans residues 242 to 280 (VQAVAAHEKAMREQAKKMNVASLRSSEAANTSAECKLAK). A helical transmembrane segment spans residues 281–301 (VALMTISLWFMAWTPYLVINY). The Extracellular portion of the chain corresponds to 302–312 (TGVFESAPISP). The chain crosses the membrane as a helical span at residues 313–335 (LATIWGSLFAKANAVYNPIVYGI). The Cytoplasmic segment spans residues 336 to 377 (SHPKYQAALYAKFPSLQCQSAPEDAGSVASGTTAVSEEKPAA). The disordered stretch occupies residues 357-377 (PEDAGSVASGTTAVSEEKPAA).

It belongs to the G-protein coupled receptor 1 family. Opsin subfamily. In the retina, expression is abundant and uniform in the anterior-posterior and oblique cells of the retinulae, with some expression in the proximal cells. There is no expression in the dorsal rim retinulae (at protein level).

It is found in the cell projection. Its subcellular location is the rhabdomere membrane. Its function is as follows. Visual pigments are the light-absorbing molecules that mediate vision. They consist of an apoprotein, opsin, covalently linked to cis-retinal. May play a role in photoperiodic photoreception. This is Opsin-1 (OP1) from Manduca sexta (Tobacco hawkmoth).